The following is a 673-amino-acid chain: UPF0313 protein blr7973 (673 aa).

One can recognise a Radical SAM core domain in the interval alanine 332–aspartate 611. [4Fe-4S] cluster-binding residues include cysteine 346, cysteine 350, and cysteine 353. The disordered stretch occupies residues arginine 632–lysine 673.

It belongs to the UPF0313 family. The cofactor is [4Fe-4S] cluster.

This chain is UPF0313 protein blr7973, found in Bradyrhizobium diazoefficiens (strain JCM 10833 / BCRC 13528 / IAM 13628 / NBRC 14792 / USDA 110).